The primary structure comprises 315 residues: tRNA dimethylallyltransferase (315 aa).

18–25 (GPTASGKT) serves as a coordination point for ATP. Residue 20-25 (TASGKT) coordinates substrate. Interaction with substrate tRNA regions lie at residues 43–46 (DSAL), 167–171 (QRLSR), and 248–253 (RCVGYR).

This sequence belongs to the IPP transferase family. In terms of assembly, monomer. The cofactor is Mg(2+).

It carries out the reaction adenosine(37) in tRNA + dimethylallyl diphosphate = N(6)-dimethylallyladenosine(37) in tRNA + diphosphate. Functionally, catalyzes the transfer of a dimethylallyl group onto the adenine at position 37 in tRNAs that read codons beginning with uridine, leading to the formation of N6-(dimethylallyl)adenosine (i(6)A). The protein is tRNA dimethylallyltransferase of Pseudoalteromonas atlantica (strain T6c / ATCC BAA-1087).